The primary structure comprises 67 residues: MTSEMQLQAQIDVIEKENKELRRRNEELGQTVECQNKQIVTQNWRLLFFASSWIVYGIVSAIKYLWG.

Residues 1-40 (MTSEMQLQAQIDVIEKENKELRRRNEELGQTVECQNKQIV) adopt a coiled-coil conformation. The chain crosses the membrane as a helical span at residues 44–66 (WRLLFFASSWIVYGIVSAIKYLW).

The protein resides in the cell membrane. The sequence is that of SPbeta prophage-derived uncharacterized protein YopZ (yopZ) from Bacillus subtilis (strain 168).